A 354-amino-acid chain; its full sequence is Green-sensitive opsin-3 (354 aa).

Topologically, residues 1–39 are extracellular; the sequence is MSGLNGFEGDNFYIPMSNRTGLVRDPFVYEQYYLAEPWQ. Asn-18 is a glycosylation site (N-linked (GlcNAc...) asparagine). The helical transmembrane segment at 40–64 threads the bilayer; the sequence is FKLLACYMFFLICLGLPINGFTLFV. The Cytoplasmic segment spans residues 65–76; it reads TAQHKKLQQPLN. The chain crosses the membrane as a helical span at residues 77 to 102; that stretch reads FILVNLAVAGMIMVCFGFTITISSAV. Over 103–116 the chain is Extracellular; it reads NGYFYFGPTACAIE. The cysteines at positions 113 and 190 are disulfide-linked. A helical transmembrane segment spans residues 117–136; sequence GFMATLGGEVALWSLVVLAI. The Cytoplasmic portion of the chain corresponds to 137-155; it reads ERYIVVCKPMGSFKFSASH. Residues 156–179 form a helical membrane-spanning segment; the sequence is ALGGIGFTWFMAMTCAAPPLVGWS. Residues 180–205 lie on the Extracellular side of the membrane; the sequence is RYIPEGLQCSCGPDYYTLNPKYNNES. Asn-203 is a glycosylation site (N-linked (GlcNAc...) asparagine). A helical transmembrane segment spans residues 206 to 233; it reads YVIYMFVVHFIVPVTVIFFTYGRLVCTV. Over 234-255 the chain is Cytoplasmic; the sequence is KSAAAAQQDSASTQKAEKEVTR. Residues 256–279 traverse the membrane as a helical segment; the sequence is MVILMVVGFLVAWTPYATVAAWIF. Residues 280 to 287 are Extracellular-facing; it reads FNKGAAFT. Residues 288-312 traverse the membrane as a helical segment; the sequence is AQFMAVPAFFSKSSALFNPIIYVLL. The residue at position 299 (Lys-299) is an N6-(retinylidene)lysine. Over 313-354 the chain is Cytoplasmic; that stretch reads NKQFRNCMLTTLFCGKNPLGDEESSTVSTKTEVSTVSSVSPA.

It belongs to the G-protein coupled receptor 1 family. Opsin subfamily. The color pigments are found in the cone photoreceptor cells.

The protein resides in the membrane. Functionally, visual pigments are the light-absorbing molecules that mediate vision. They consist of an apoprotein, opsin, covalently linked to cis-retinal. This chain is Green-sensitive opsin-3 (RH11), found in Psalidodon fasciatus (Banded astyanax).